The sequence spans 131 residues: uncharacterized protein (131 aa).

Positions 16-71 (MSEQERDEVLEDDDDDEDNKSSQQERDEFVEDDDNNSIQSSPSCAQPLLTQYHDDG) are disordered. Over residues 20 to 33 (ERDEVLEDDDDDED) the composition is skewed to acidic residues.

This is an uncharacterized protein from Dictyostelium discoideum (Social amoeba).